The chain runs to 643 residues: tRNA 5-methylaminomethyl-2-thiouridine biosynthesis bifunctional protein MnmC (643 aa).

Residues 1–223 (MPDRLVSATL…VDDRLVGDYA (223 aa)) form a tRNA (mnm(5)s(2)U34)-methyltransferase region. Positions 247–643 (IGAGLAGCAV…LRARRVGSAG (397 aa)) are FAD-dependent cmnm(5)s(2)U34 oxidoreductase.

This sequence in the N-terminal section; belongs to the methyltransferase superfamily. tRNA (mnm(5)s(2)U34)-methyltransferase family. The protein in the C-terminal section; belongs to the DAO family. The cofactor is FAD.

It is found in the cytoplasm. The catalysed reaction is 5-aminomethyl-2-thiouridine(34) in tRNA + S-adenosyl-L-methionine = 5-methylaminomethyl-2-thiouridine(34) in tRNA + S-adenosyl-L-homocysteine + H(+). In terms of biological role, catalyzes the last two steps in the biosynthesis of 5-methylaminomethyl-2-thiouridine (mnm(5)s(2)U) at the wobble position (U34) in tRNA. Catalyzes the FAD-dependent demodification of cmnm(5)s(2)U34 to nm(5)s(2)U34, followed by the transfer of a methyl group from S-adenosyl-L-methionine to nm(5)s(2)U34, to form mnm(5)s(2)U34. The polypeptide is tRNA 5-methylaminomethyl-2-thiouridine biosynthesis bifunctional protein MnmC (Burkholderia cenocepacia (strain HI2424)).